We begin with the raw amino-acid sequence, 121 residues long: Small ribosomal subunit protein uS13 (121 aa).

Residues 93-121 (RGLPVRGQNTKNNARTRKGPRRTVANKKK) form a disordered region. A compositionally biased stretch (basic residues) spans 106–121 (ARTRKGPRRTVANKKK).

This sequence belongs to the universal ribosomal protein uS13 family. Part of the 30S ribosomal subunit. Forms a loose heterodimer with protein S19. Forms two bridges to the 50S subunit in the 70S ribosome.

Its function is as follows. Located at the top of the head of the 30S subunit, it contacts several helices of the 16S rRNA. In the 70S ribosome it contacts the 23S rRNA (bridge B1a) and protein L5 of the 50S subunit (bridge B1b), connecting the 2 subunits; these bridges are implicated in subunit movement. Contacts the tRNAs in the A and P-sites. This is Small ribosomal subunit protein uS13 from Bacillus licheniformis (strain ATCC 14580 / DSM 13 / JCM 2505 / CCUG 7422 / NBRC 12200 / NCIMB 9375 / NCTC 10341 / NRRL NRS-1264 / Gibson 46).